Consider the following 380-residue polypeptide: Tetratricopeptide repeat protein 19, mitochondrial (380 aa).

The transit peptide at 1–70 directs the protein to the mitochondrion; the sequence is MFRLLSWSLG…AALAWFSRPA (70 aa). 5 TPR repeats span residues 136-169, 179-212, 237-270, 279-312, and 318-351; these read TYTY…LLGG, IEIS…LEEK, GMCL…SEEI, IVLM…ARQI, and HMVL…AKLK.

Belongs to the TTC19 family. In terms of assembly, binds to the mature mitochondrial complex III dimer, after the incorporation of the Rieske protein UQCRFS1. Interacts with UQCRC1 and UQCRFS1. Interacts with ZFYVE26 and CHMP4B. Post-translationally, proteolytically cleaved by PARL.

It is found in the mitochondrion inner membrane. Functionally, required for the preservation of the structural and functional integrity of mitochondrial respiratory complex III by allowing the physiological turnover of the Rieske protein UQCRFS1. Involved in the clearance of UQCRFS1 N-terminal fragments, which are produced upon incorporation of UQCRFS1 into the complex III and whose presence is detrimental for its catalytic activity. This is Tetratricopeptide repeat protein 19, mitochondrial (TTC19) from Homo sapiens (Human).